Here is a 540-residue protein sequence, read N- to C-terminus: H(+)/hexose cotransporter 2 (540 aa).

Residues 1–29 (MAGGGPVASTTTNRASQYGYARGGLNWYI) are Cytoplasmic-facing. A helical membrane pass occupies residues 30–50 (FIVALTAGSGGLLFGYDIGVT). Topologically, residues 51-90 (GGVTSMPEFLQKFFPSIYDRTQQPSDSKDPYCTYDDQKLQ) are extracellular. Residues 91 to 111 (LFTSSFFLAGMFVSFFAGSVV) traverse the membrane as a helical segment. The Cytoplasmic portion of the chain corresponds to 112-124 (RRWGRKPTMLIAS). Residues 125 to 135 (VLFLAGAGLNA) traverse the membrane as a helical segment. Residues 136–147 (GAQDLAMLVIGR) lie on the Extracellular side of the membrane. A helical membrane pass occupies residues 148–168 (VLLGFGVGGGNNAVPLYLSEC). Residues 169–176 (APPKYRGG) are Cytoplasmic-facing. Residues 177–197 (LNMMFQLAVTIGIIVAQLVNY) form a helical membrane-spanning segment. At 198-207 (GTQTMNNGWR) the chain is on the extracellular side. Residues 208-228 (LSLGLAGVPAIILLIGSLLLP) traverse the membrane as a helical segment. Topologically, residues 229-296 (ETPNSLIERG…YSPMLIVTSL (68 aa)) are cytoplasmic. Residues 297-317 (IAMLQQLTGINAIMFYVPVLF) traverse the membrane as a helical segment. Residues 318–326 (SSFGTARHA) lie on the Extracellular side of the membrane. A helical transmembrane segment spans residues 327–337 (ALLNTVIIGAV). The Cytoplasmic portion of the chain corresponds to 338–355 (NVAATFVSIFSVDKFGRR). The chain crosses the membrane as a helical span at residues 356–376 (GLFLEGGIQMFIGQVVTAAVL). Residues 377 to 396 (GVELNKYGTNLPSSTAAGVL) lie on the Extracellular side of the membrane. The helical transmembrane segment at 397–417 (VVICVYVAAFAWSWGPLGWLV) threads the bilayer. Over 418–435 (PSEIQTLETRGAGMSMAV) the chain is Cytoplasmic. A helical transmembrane segment spans residues 436–456 (IVNFLFSFVIGQAFLSMMCAM). The Extracellular portion of the chain corresponds to 457–458 (RW). A helical transmembrane segment spans residues 459 to 479 (GVFLFFAGWVVIMTFFVYFCL). The Cytoplasmic portion of the chain corresponds to 480 to 540 (PETKGVPVET…SEDGKPASDQ (61 aa)).

The protein belongs to the major facilitator superfamily. Sugar transporter (TC 2.A.1.1) family.

The protein localises to the membrane. Its function is as follows. Active uptake of galactose. The chain is H(+)/hexose cotransporter 2 (HUP2) from Parachlorella kessleri (Green alga).